Consider the following 61-residue polypeptide: Small ribosomal subunit protein uS14 (61 aa).

Residues Cys-24, Cys-27, Cys-40, and Cys-43 each coordinate Zn(2+).

The protein belongs to the universal ribosomal protein uS14 family. Zinc-binding uS14 subfamily. Part of the 30S ribosomal subunit. Contacts proteins S3 and S10. It depends on Zn(2+) as a cofactor.

Binds 16S rRNA, required for the assembly of 30S particles and may also be responsible for determining the conformation of the 16S rRNA at the A site. This is Small ribosomal subunit protein uS14 from Desulfovibrio desulfuricans (strain ATCC 27774 / DSM 6949 / MB).